Here is a 67-residue protein sequence, read N- to C-terminus: Amphipathic peptide Tx348 (67 aa).

An N-terminal signal peptide occupies residues 1 to 23; that stretch reads MKSQAFFLLFLVVLLLATTQSEA. Phenylalanine 33 is subject to Phenylalanine amide. Residues 37–67 constitute a propeptide that is removed on maturation; that stretch reads SMRNMDTMKYLYDPSLSAADLKTLQKLMENY.

Belongs to the non-disulfide-bridged peptide (NDBP) superfamily. Short antimicrobial peptide (group 4) family. In terms of tissue distribution, expressed by the venom gland.

It localises to the secreted. It is found in the target cell membrane. Amphipathic peptide that has antibacterial activities. The sequence is that of Amphipathic peptide Tx348 from Buthus israelis (Israeli scorpion).